The chain runs to 270 residues: Malonyl-[acyl-carrier protein] O-methyltransferase (270 aa).

This sequence belongs to the methyltransferase superfamily.

It carries out the reaction malonyl-[ACP] + S-adenosyl-L-methionine = malonyl-[ACP] methyl ester + S-adenosyl-L-homocysteine. Its pathway is cofactor biosynthesis; biotin biosynthesis. Converts the free carboxyl group of a malonyl-thioester to its methyl ester by transfer of a methyl group from S-adenosyl-L-methionine (SAM). It allows to synthesize pimeloyl-ACP via the fatty acid synthetic pathway. This chain is Malonyl-[acyl-carrier protein] O-methyltransferase, found in Magnetococcus marinus (strain ATCC BAA-1437 / JCM 17883 / MC-1).